We begin with the raw amino-acid sequence, 224 residues long: Peroxiredoxin-6 (224 aa).

Residues 5–169 form the Thioredoxin domain; sequence LLLGDEAPNF…ILRVVDSLQL (165 aa). Positions 31 to 40 are required and sufficient for targeting to lysosomes and lamellar bodies; that stretch reads DSWGILFSHP. The residue at position 44 (T44) is a Phosphothreonine. The active-site Cysteine sulfenic acid (-SOH) intermediate; for peroxidase activity is C47. Residue K63 is modified to N6-acetyllysine. Phosphotyrosine is present on Y89. T93 bears the Phosphothreonine mark. D140 serves as the catalytic For phospholipase activity. T177 is modified (phosphothreonine; by MAPK). An N6-acetyllysine; alternate modification is found at K209. At K209 the chain carries N6-succinyllysine; alternate.

It belongs to the peroxiredoxin family. Prx6 subfamily. Homodimer. Interacts with GSTP1; mediates PRDX6 glutathionylation and regeneration. Interacts with APEX1. Interacts with STH. May interact with FAM168B. May interact with HTR2A. In terms of processing, irreversibly inactivated by overoxidation of Cys-47 to sulfinic acid (Cys-SO(2)H) and sulfonic acid (Cys-SO(3)H) forms upon oxidative stress. Phosphorylation at Thr-177 by MAP kinases increases the phospholipase activity of the enzyme. The phosphorylated form exhibits a greater lysophosphatidylcholine acyltransferase activity compared to the non-phosphorylated form. As to expression, highly expressed in heart, kidney and liver. Moderate expression in brain and stomach. Very low levels in intestine.

Its subcellular location is the cytoplasm. The protein resides in the lysosome. It carries out the reaction a hydroperoxide + 2 glutathione = an alcohol + glutathione disulfide + H2O. It catalyses the reaction a 1,2-diacyl-sn-glycero-3-phosphocholine + H2O = a 1-acyl-sn-glycero-3-phosphocholine + a fatty acid + H(+). The enzyme catalyses a 1-acyl-sn-glycero-3-phosphocholine + an acyl-CoA = a 1,2-diacyl-sn-glycero-3-phosphocholine + CoA. The catalysed reaction is 1-hexadecanoyl-sn-glycero-3-phosphocholine + hexadecanoyl-CoA = 1,2-dihexadecanoyl-sn-glycero-3-phosphocholine + CoA. It carries out the reaction 1,2-dihexadecanoyl-sn-glycero-3-phosphocholine + H2O = 1-hexadecanoyl-sn-glycero-3-phosphocholine + hexadecanoate + H(+). With respect to regulation, MJ33 or lithium;[(2R)-1-hexadecoxy-3-(2,2,2-trifluoroethoxy)propan-2-yl] methyl phosphate inhibits its phospholipase A2 activity. CI-976 or 2,2-Dimethyl-N-(2,4,6-trimethoxyphenyl)dodecanamide inhibits its lysophosphatidylcholine acyltransferase activity. In terms of biological role, thiol-specific peroxidase that catalyzes the reduction of hydrogen peroxide and organic hydroperoxides to water and alcohols, respectively. Can reduce H(2)O(2) and short chain organic, fatty acid, and phospholipid hydroperoxides. Has phospholipase activity. Can either reduce the oxidized sn-2 fatty acyl group of phospholipids (peroxidase activity) or hydrolyze the sn-2 ester bond of phospholipids (phospholipase activity). These activities are dependent on binding to phospholipids at acidic pH and to oxidized phospholipds at cytosolic pH. Plays a role in cell protection against oxidative stress by detoxifying peroxides and in phospholipid homeostasis. Exhibits acyl-CoA-dependent lysophospholipid acyltransferase which mediates the conversion of lysophosphatidylcholine (1-acyl-sn-glycero-3-phosphocholine or LPC) into phosphatidylcholine (1,2-diacyl-sn-glycero-3-phosphocholine or PC). Shows a clear preference for LPC as the lysophospholipid and for palmitoyl CoA as the fatty acyl substrate. This chain is Peroxiredoxin-6 (Prdx6), found in Mus musculus (Mouse).